We begin with the raw amino-acid sequence, 254 residues long: CRISPR-associated endoribonuclease Cas6 1 (254 aa).

Tyr-32 serves as the catalytic Proton acceptor. His-47 acts as the Proton donor in catalysis.

It belongs to the CRISPR-associated protein Cas6/Cse3/CasE family.

Functionally, CRISPR (clustered regularly interspaced short palindromic repeat) is an adaptive immune system that provides protection against mobile genetic elements (viruses, transposable elements and conjugative plasmids). CRISPR clusters contain sequences complementary to antecedent mobile elements and target invading nucleic acids. CRISPR clusters are transcribed and processed into CRISPR RNA (crRNA). This protein processes pre-crRNA into individual crRNA units. This chain is CRISPR-associated endoribonuclease Cas6 1 (cas6a), found in Methanocaldococcus jannaschii (strain ATCC 43067 / DSM 2661 / JAL-1 / JCM 10045 / NBRC 100440) (Methanococcus jannaschii).